Reading from the N-terminus, the 849-residue chain is G-type lectin S-receptor-like serine/threonine-protein kinase B120 (849 aa).

The N-terminal stretch at 1 to 25 (MRFFRKTSLYLSLFLYFFLYESSMA) is a signal peptide. Residues 26–153 (ANTIRRGESL…DTDRPIWESF (128 aa)) enclose the Bulb-type lectin domain. The Extracellular segment spans residues 26 to 438 (ANTIRRGESL…SEVGENRKTK (413 aa)). 6 N-linked (GlcNAc...) asparagine glycosylation sites follow: asparagine 110, asparagine 191, asparagine 210, asparagine 230, asparagine 273, and asparagine 282. The EGF-like; atypical domain maps to 295-332 (PDSECDQYNRCGKFGICDMKGSNGICSCIHGYEQVSVG). 2 disulfides stabilise this stretch: cysteine 299/cysteine 311 and cysteine 305/cysteine 320. N-linked (GlcNAc...) asparagine glycans are attached at residues asparagine 333, asparagine 349, and asparagine 388. Residues 346 to 427 (CERNISVGED…GGSSLHIRLA (82 aa)) form the PAN domain. Cystine bridges form between cysteine 381–cysteine 402 and cysteine 385–cysteine 391. The chain crosses the membrane as a helical span at residues 439–459 (IAVIVAVLVGVILIGIFALLL). The Cytoplasmic portion of the chain corresponds to 460–849 (WRFKRKKDVS…EITSTVVLGR (390 aa)). The Protein kinase domain occupies 529 to 814 (FCKENELGRG…TLAAPRQPTF (286 aa)). Residues 535–543 (LGRGGFGPV) and lysine 557 each bind ATP. Serine 563 is modified (phosphoserine). The interval 618–635 (TKQALIDWKLRFSIIEGI) is caM-binding. Residue aspartate 654 is the Proton acceptor of the active site. Phosphoserine occurs at positions 658 and 671. A Phosphothreonine modification is found at threonine 688. 2 positions are modified to phosphoserine: serine 732 and serine 837. A Phosphothreonine modification is found at threonine 844.

The protein belongs to the protein kinase superfamily. Ser/Thr protein kinase family.

The protein resides in the cell membrane. It carries out the reaction L-seryl-[protein] + ATP = O-phospho-L-seryl-[protein] + ADP + H(+). The catalysed reaction is L-threonyl-[protein] + ATP = O-phospho-L-threonyl-[protein] + ADP + H(+). This chain is G-type lectin S-receptor-like serine/threonine-protein kinase B120 (B120), found in Arabidopsis thaliana (Mouse-ear cress).